The sequence spans 431 residues: Divergent protein kinase domain 1B (431 aa).

Topologically, residues Met-1–Lys-30 are cytoplasmic. Residues Arg-5–Arg-6 carry the May mediate ER retention motif. A helical membrane pass occupies residues Tyr-31–Ser-51. The Lumenal segment spans residues Ser-52–Ser-431. Disulfide bonds link Cys-57–Cys-94 and Cys-62–Cys-117.

The protein belongs to the DIPK family. Post-translationally, among the many cysteines in the lumenal domain, most are probably involved in disulfide bonds.

The protein resides in the endoplasmic reticulum membrane. The chain is Divergent protein kinase domain 1B (dipk1b) from Xenopus tropicalis (Western clawed frog).